The primary structure comprises 387 residues: Putative gustatory receptor 22d (387 aa).

Topologically, residues 1-43 are cytoplasmic; it reads MFRPRCGLRQKFVYVILKSILYSSWLLGIFPFKYEPKKRRLRR. A helical membrane pass occupies residues 44–64; sequence SMWLILFGVVISSSLLILMVK. Topologically, residues 65-82 are extracellular; the sequence is QSAEDREHGIMLDVFQRN. A helical transmembrane segment spans residues 83–103; the sequence is ALLYQISSLMGVVGVVSICTV. Residues 104–142 lie on the Cytoplasmic side of the membrane; the sequence is HLRTLWRSKHLEEIYNGLMLLEAKYFCSNAVECPAFDGY. A helical transmembrane segment spans residues 143–163; the sequence is VIQKGVVIVVGLLAPWMVHFG. Residues 164-184 are Extracellular-facing; that stretch reads MPDSKLPVLNVLVVSMVKLGT. A helical membrane pass occupies residues 185 to 205; that stretch reads LLLALHYHLGVVIIYRFVWLI. Residues 206–252 are Cytoplasmic-facing; the sequence is NRELLSLVCSLRGNHKGSSSRVRFLLKLYNKLVNLYSKLADCYDCQT. Residues 253 to 273 form a helical membrane-spanning segment; the sequence is VLMMAIFLAANIIVCFYMIVY. Topologically, residues 274 to 281 are extracellular; that stretch reads RISLSKMS. The chain crosses the membrane as a helical span at residues 282–302; the sequence is FFVMLIMFPLAIANNFMDFWL. Topologically, residues 303-363 are cytoplasmic; that stretch reads SMKVCDLLQK…HCGLFHVNRE (61 aa). Residues 364–384 form a helical membrane-spanning segment; the sequence is MGFKMFVASVLYLLYLVQFDY. Topologically, residues 385–387 are extracellular; that stretch reads MNL.

This sequence belongs to the insect chemoreceptor superfamily. Gustatory receptor (GR) family. Gr22e subfamily. In terms of tissue distribution, expressed in neurons of the dorsal pharyngeal sense organs of larvae.

The protein localises to the cell membrane. Probable gustatory receptor which mediates acceptance or avoidance behavior, depending on its substrates. This chain is Putative gustatory receptor 22d, found in Drosophila melanogaster (Fruit fly).